The sequence spans 145 residues: MELVQVLKRGLQQITGHGGLRGYLRVFFRTNDAKVGTLVGEDKYGNKYYEDNKQFFGRHRWVVYTTEMNGKNTFWDVDGSMVPPEWHRWLHSMTDDPPTTKPLTARKFIWTNHKFNMTGTPEQYVPYSTTRKKIQEWIPPSTPYK.

Met1 carries the post-translational modification N-acetylmethionine.

Belongs to the complex I NDUFA12 subunit family. In terms of assembly, complex I is composed of 45 different subunits.

Its subcellular location is the mitochondrion inner membrane. Accessory subunit of the mitochondrial membrane respiratory chain NADH dehydrogenase (Complex I), that is believed not to be involved in catalysis. Complex I functions in the transfer of electrons from NADH to the respiratory chain. The immediate electron acceptor for the enzyme is believed to be ubiquinone. The sequence is that of NADH dehydrogenase [ubiquinone] 1 alpha subcomplex subunit 12 (NDUFA12) from Gorilla gorilla gorilla (Western lowland gorilla).